A 1083-amino-acid chain; its full sequence is Ubiquitin carboxyl-terminal hydrolase 28 (1083 aa).

Residues 60-82 form a disordered region; that stretch reads DQRVKEPSHDTAATEPSEVEESA. Phosphoserine is present on Ser67. The region spanning 97-116 is the UIM domain; it reads DNKDDLQAAIALSLLESPNI. Lys99 is covalently cross-linked (Glycyl lysine isopeptide (Lys-Gly) (interchain with G-Cter in SUMO2)). Residues 162–656 form the USP domain; it reads VGLKNVGNTC…SAYCLMYIND (495 aa). Catalysis depends on Cys171, which acts as the Nucleophile. Ser376 bears the Phosphoserine mark. Residues 483-539 form a disordered region; that stretch reads DLTAKESSSPKSCSQNAEGSFSSPEDALPNSEVMNGPFTSPHSSLEMPAPPPAPRTV. The span at 487–505 shows a compositional bias: polar residues; the sequence is KESSSPKSCSQNAEGSFSS. Ser556 carries the phosphoserine modification. The active-site Proton acceptor is the His606. The tract at residues 703–728 is disordered; it reads EEQSCKIPQMESSPNSSSQDFSTSQE. Low complexity predominate over residues 714-728; that stretch reads SSPNSSSQDFSTSQE. Ser720 carries the post-translational modification Phosphoserine. Thr1054 is subject to Phosphothreonine.

The protein belongs to the peptidase C19 family. USP28 subfamily. As to quaternary structure, interacts with ZNF304. Interacts with PRKD1. Interacts with TP53BP1. Interacts with FBXW7; following DNA damage, dissociates from FBXW7 leading to degradation of MYC. Degraded upon nickel ion level or hypoxia exposure. In terms of processing, phosphorylated upon DNA damage at Ser-67 and Ser-720, by ATM or ATR. Phosphorylated by PRKD1.

The protein localises to the nucleus. It localises to the nucleoplasm. The enzyme catalyses Thiol-dependent hydrolysis of ester, thioester, amide, peptide and isopeptide bonds formed by the C-terminal Gly of ubiquitin (a 76-residue protein attached to proteins as an intracellular targeting signal).. Its function is as follows. Deubiquitinase involved in DNA damage response checkpoint and MYC proto-oncogene stability. Involved in DNA damage induced apoptosis by specifically deubiquitinating proteins of the DNA damage pathway such as CLSPN. Also involved in G2 DNA damage checkpoint, by deubiquitinating CLSPN, and preventing its degradation by the anaphase promoting complex/cyclosome (APC/C). In contrast, it does not deubiquitinate PLK1. Specifically deubiquitinates MYC in the nucleoplasm, leading to prevent MYC degradation by the proteasome: acts by specifically interacting with FBXW7 (FBW7alpha) in the nucleoplasm and counteracting ubiquitination of MYC by the SCF(FBXW7) complex. Deubiquitinates ZNF304, hence preventing ZNF304 degradation by the proteasome and leading to the activated KRAS-mediated promoter hypermethylation and transcriptional silencing of tumor suppressor genes (TSGs) in a subset of colorectal cancers (CRC) cells. The chain is Ubiquitin carboxyl-terminal hydrolase 28 (Usp28) from Rattus norvegicus (Rat).